A 69-amino-acid polypeptide reads, in one-letter code: MVIFLAYFLVVNESEAFFGHLFKLATKIIPSLFQRKKERSVMNRDLENLFDPYQRNLEMDRLLKQLRNY.

An N-terminal signal peptide occupies residues 1–16 (MVIFLAYFLVVNESEA). A propeptide spanning residues 38 to 69 (ERSVMNRDLENLFDPYQRNLEMDRLLKQLRNY) is cleaved from the precursor.

Belongs to the non-disulfide-bridged peptide (NDBP) superfamily. Medium-length antimicrobial peptide (group 3) family. As to expression, expressed by the venom gland.

It is found in the secreted. The protein resides in the target cell membrane. Functionally, amphipathic peptide that exhibits extensive cytolytic activities against both prokaryotic and eukaryotic cells. Acts by fastly disrupting the bacterial membrane. Is more potent against Gram-positive bacteria than against Gram-negative bacteria, and fungi (LC=25.1-8.3 uM). Shows potent activity against penicillin (MIC=3.0 uM) and methicillin (MIC=1.5-3.0 uM) resistant bacteria. Is lethal to the fungus Beauveria sp (LC=1.9 uM), a highly lethal pathogenic fungus to insects and resistant to many AMPs. Shows hemolytic activity against rabbit erythrocytes (37.7% of inhibition at 6.25 uM) and cytolysis against rat dorsal root ganglions. May act by disrupting the integrity of the bacterial cell membrane. Antibiotic activity is not affected by major negatively charged components of the prokaryotic cell wall (e.g. lipopolysaccharides and lipoteichoic acid). In vivo, intravenous injection into mice tail provokes uncomfortable symptoms with a death rate of 12.5%. In vivo, in a mouse model of lethal peritonitis, shows potent antibiotic activity without cytotoxicity, improving the survival rate. The protein is Antimicrobial peptide Meucin-18 of Mesobuthus eupeus (Lesser Asian scorpion).